A 66-amino-acid polypeptide reads, in one-letter code: Large ribosomal subunit protein bL33c (66 aa).

It belongs to the bacterial ribosomal protein bL33 family.

It is found in the plastid. The protein localises to the chloroplast. The sequence is that of Large ribosomal subunit protein bL33c from Daucus carota (Wild carrot).